A 500-amino-acid polypeptide reads, in one-letter code: Lysine--tRNA ligase (500 aa).

The Mg(2+) site is built by Glu410 and Glu417.

The protein belongs to the class-II aminoacyl-tRNA synthetase family. Homodimer. Mg(2+) is required as a cofactor.

The protein resides in the cytoplasm. The enzyme catalyses tRNA(Lys) + L-lysine + ATP = L-lysyl-tRNA(Lys) + AMP + diphosphate. This chain is Lysine--tRNA ligase, found in Pseudomonas putida (strain ATCC 47054 / DSM 6125 / CFBP 8728 / NCIMB 11950 / KT2440).